A 443-amino-acid polypeptide reads, in one-letter code: Trigger factor (443 aa).

The PPIase FKBP-type domain maps to G161–P246.

Belongs to the FKBP-type PPIase family. Tig subfamily.

Its subcellular location is the cytoplasm. The enzyme catalyses [protein]-peptidylproline (omega=180) = [protein]-peptidylproline (omega=0). Involved in protein export. Acts as a chaperone by maintaining the newly synthesized protein in an open conformation. Functions as a peptidyl-prolyl cis-trans isomerase. This chain is Trigger factor, found in Legionella pneumophila subsp. pneumophila (strain Philadelphia 1 / ATCC 33152 / DSM 7513).